Reading from the N-terminus, the 311-residue chain is Probable deoxyhypusine synthase (311 aa).

The active-site Nucleophile is K284.

The protein belongs to the deoxyhypusine synthase family. NAD(+) is required as a cofactor.

The catalysed reaction is [eIF5A protein]-L-lysine + spermidine = [eIF5A protein]-deoxyhypusine + propane-1,3-diamine. It functions in the pathway protein modification; eIF5A hypusination. Catalyzes the NAD-dependent oxidative cleavage of spermidine and the subsequent transfer of the butylamine moiety of spermidine to the epsilon-amino group of a specific lysine residue of the eIF-5A precursor protein to form the intermediate deoxyhypusine residue. This is Probable deoxyhypusine synthase (dys) from Sulfurisphaera tokodaii (strain DSM 16993 / JCM 10545 / NBRC 100140 / 7) (Sulfolobus tokodaii).